Consider the following 266-residue polypeptide: 4-hydroxy-tetrahydrodipicolinate reductase (266 aa).

10 to 15 serves as a coordination point for NAD(+); sequence GPRGRM. Lys38 is an NADP(+) binding site. NAD(+) contacts are provided by residues 99–101 and 125–128; these read GTT and APNF. Residue His155 is the Proton donor/acceptor of the active site. His156 is a binding site for (S)-2,3,4,5-tetrahydrodipicolinate. Residue Lys159 is the Proton donor of the active site. 165–166 provides a ligand contact to (S)-2,3,4,5-tetrahydrodipicolinate; the sequence is GT.

The protein belongs to the DapB family.

The protein resides in the cytoplasm. The enzyme catalyses (S)-2,3,4,5-tetrahydrodipicolinate + NAD(+) + H2O = (2S,4S)-4-hydroxy-2,3,4,5-tetrahydrodipicolinate + NADH + H(+). It catalyses the reaction (S)-2,3,4,5-tetrahydrodipicolinate + NADP(+) + H2O = (2S,4S)-4-hydroxy-2,3,4,5-tetrahydrodipicolinate + NADPH + H(+). It participates in amino-acid biosynthesis; L-lysine biosynthesis via DAP pathway; (S)-tetrahydrodipicolinate from L-aspartate: step 4/4. Catalyzes the conversion of 4-hydroxy-tetrahydrodipicolinate (HTPA) to tetrahydrodipicolinate. The protein is 4-hydroxy-tetrahydrodipicolinate reductase of Bacillus cereus (strain ATCC 14579 / DSM 31 / CCUG 7414 / JCM 2152 / NBRC 15305 / NCIMB 9373 / NCTC 2599 / NRRL B-3711).